The chain runs to 367 residues: MLCGGSRVLQHLSDHNHHNSIGLGLGFCGAKIVQLSSFFLRPSQAMAKSHHFSRKLRQRMISSFGSHCRTSGEVPILHNCFSQREDDPELPVEGLSPVSGGIVALGKFDALHIGHRELTIQASRIGAPYLLSFVGMAEVLGWEPRAPIVAKCDRQRVLTSWASYCGDRAPEEYEIEFASVRHLTPRQFVEKLSKELRVCGVVAGENYRFGYKASGDASELVRLCEECGITACIINSVMDMKQGSAKRDSGDSKDRGQVSSTRVRQALAAGDMRYVSELLGRAHRLILRVRTQDMPSERMISVPRSSILNLPPGIGIYKACLLLVGDESSVPCTVVVDTSNIHVETEEVRLCNLDWSQEFRLVSVEFG.

A chloroplast-targeting transit peptide spans 1-57 (MLCGGSRVLQHLSDHNHHNSIGLGLGFCGAKIVQLSSFFLRPSQAMAKSHHFSRKLR).

Mg(2+) is required as a cofactor.

It is found in the plastid. It localises to the chloroplast. The enzyme catalyses FMN + ATP + H(+) = FAD + diphosphate. It participates in cofactor biosynthesis; FAD biosynthesis; FAD from FMN: step 1/1. Functionally, catalyzes the adenylation of flavin mononucleotide (FMN) to form flavin adenine dinucleotide (FAD) coenzyme. The sequence is that of FAD synthetase 2, chloroplastic from Arabidopsis thaliana (Mouse-ear cress).